The primary structure comprises 82 residues: MVTIRLARGGAKKRPFYNIVVADSRNARDGRFIERVGFFNPLARGQEETLRLDLARVEHWVANGAATTDRVAKLIKDAKAAA.

It belongs to the bacterial ribosomal protein bS16 family.

This chain is Small ribosomal subunit protein bS16, found in Shewanella sp. (strain ANA-3).